The sequence spans 174 residues: ATP synthase subunit delta, sodium ion specific (174 aa).

It belongs to the ATPase delta chain family. As to quaternary structure, F-type ATPases have 2 components, F(1) - the catalytic core - and F(0) - the membrane proton channel. F(1) has five subunits: alpha(3), beta(3), gamma(1), delta(1), epsilon(1). F(0) has three main subunits: a(1), b(2) and c(10-14). The alpha and beta chains form an alternating ring which encloses part of the gamma chain. F(1) is attached to F(0) by a central stalk formed by the gamma and epsilon chains, while a peripheral stalk is formed by the delta and b chains.

It is found in the cell inner membrane. Functionally, f(1)F(0) ATP synthase produces ATP from ADP in the presence of a proton or sodium gradient. F-type ATPases consist of two structural domains, F(1) containing the extramembraneous catalytic core and F(0) containing the membrane proton channel, linked together by a central stalk and a peripheral stalk. During catalysis, ATP synthesis in the catalytic domain of F(1) is coupled via a rotary mechanism of the central stalk subunits to proton translocation. Its function is as follows. This protein is part of the stalk that links CF(0) to CF(1). It either transmits conformational changes from CF(0) to CF(1) or is implicated in proton conduction. The chain is ATP synthase subunit delta, sodium ion specific from Ilyobacter tartaricus.